Here is a 398-residue protein sequence, read N- to C-terminus: Phosphoglycerate kinase (398 aa).

Residues 21 to 23, R36, 59 to 62, R119, and R157 each bind substrate; these read DFN and HLGR. Residues K208, G296, E327, and 354 to 357 each bind ATP; that span reads GGDS.

The protein belongs to the phosphoglycerate kinase family. In terms of assembly, monomer.

It localises to the cytoplasm. It carries out the reaction (2R)-3-phosphoglycerate + ATP = (2R)-3-phospho-glyceroyl phosphate + ADP. It participates in carbohydrate degradation; glycolysis; pyruvate from D-glyceraldehyde 3-phosphate: step 2/5. This is Phosphoglycerate kinase from Streptococcus agalactiae serotype Ia (strain ATCC 27591 / A909 / CDC SS700).